Here is a 72-residue protein sequence, read N- to C-terminus: Small ribosomal subunit protein bS20 (72 aa).

It belongs to the bacterial ribosomal protein bS20 family.

In terms of biological role, binds directly to 16S ribosomal RNA. In Klebsiella pneumoniae, this protein is Small ribosomal subunit protein bS20 (rpsT).